A 382-amino-acid chain; its full sequence is Galactokinase (382 aa).

34–37 (EHTD) is a binding site for substrate. Position 124–130 (124–130 (GAGLSSS)) interacts with ATP. 2 residues coordinate Mg(2+): serine 130 and glutamate 162. The active-site Proton acceptor is aspartate 174. Tyrosine 223 contributes to the substrate binding site.

The protein belongs to the GHMP kinase family. GalK subfamily.

Its subcellular location is the cytoplasm. It carries out the reaction alpha-D-galactose + ATP = alpha-D-galactose 1-phosphate + ADP + H(+). It functions in the pathway carbohydrate metabolism; galactose metabolism. Its function is as follows. Catalyzes the transfer of the gamma-phosphate of ATP to D-galactose to form alpha-D-galactose-1-phosphate (Gal-1-P). The chain is Galactokinase from Salmonella agona (strain SL483).